A 182-amino-acid chain; its full sequence is Transcription antitermination protein NusB (182 aa).

Residues 159–182 (TPVENSEAEAAGYPVEESIEEDSQ) form a disordered region.

Belongs to the NusB family.

Involved in transcription antitermination. Required for transcription of ribosomal RNA (rRNA) genes. Binds specifically to the boxA antiterminator sequence of the ribosomal RNA (rrn) operons. The polypeptide is Transcription antitermination protein NusB (Corynebacterium diphtheriae (strain ATCC 700971 / NCTC 13129 / Biotype gravis)).